The following is a 313-amino-acid chain: Non-functional target of rapamycin complex subunit LST8-2 (313 aa).

WD repeat units lie at residues 1–35 (MFENKPDDSPVYLATASHDQTIRLWQARTGRCYFS), 38–76 (YPDLHVNRLELTPEKGKLVAACNPHIRLFDLRSYNPHIP), 82–121 (SHTKNVMAVGFQYTGHMMYSGSEDGSVKIWDLRVRECQRE), 123–162 (RSVSPVNTVVLHPNQTELISGDQNGNIRVWDLRADLCSCE), 166–205 (EVGTPIRSLTVMWDGTMVVAANDRGTCYVWRSLCERQTMT), 215–255 (AHNS…LEKV), and 258–297 (GHERWVWDCDFSMDGEYLVTASSDTTARLWSMRAGKEEMV).

This sequence belongs to the WD repeat LST8 family.

Functionally, probable non-functional protein. The polypeptide is Non-functional target of rapamycin complex subunit LST8-2 (Arabidopsis thaliana (Mouse-ear cress)).